Consider the following 880-residue polypeptide: A-adding tRNA nucleotidyltransferase (880 aa).

CBS domains are found at residues 315–373 and 377–435; these read MSSP…NLPV and MHTE…RNAE. 487–490 is an ATP binding site; it reads GFVR. Positions 500 and 502 each coordinate Mg(2+). ATP-binding positions include 574 to 575, Asn579, 619 to 628, Arg632, and Arg661; these read RD and DPTRVFRAIR.

The protein belongs to the tRNA nucleotidyltransferase/poly(A) polymerase family. It depends on Mg(2+) as a cofactor.

It carries out the reaction a tRNA with a 3' CC end + ATP = a tRNA with a 3' CCA end + diphosphate. TRNA nucleotidyltransferase involved in the synthesis of the tRNA CCA terminus. Adds the terminal adenosine residue to tRNA. This is A-adding tRNA nucleotidyltransferase from Geobacter sulfurreducens (strain ATCC 51573 / DSM 12127 / PCA).